The sequence spans 338 residues: 1-aminocyclopropane-1-carboxylate deaminase (338 aa).

An N6-(pyridoxal phosphate)lysine modification is found at Lys-51. Catalysis depends on Ser-78, which acts as the Nucleophile.

The protein belongs to the ACC deaminase/D-cysteine desulfhydrase family. In terms of assembly, homotrimer. The cofactor is pyridoxal 5'-phosphate.

The enzyme catalyses 1-aminocyclopropane-1-carboxylate + H2O = 2-oxobutanoate + NH4(+). Its function is as follows. Catalyzes a cyclopropane ring-opening reaction, the irreversible conversion of 1-aminocyclopropane-1-carboxylate (ACC) to ammonia and alpha-ketobutyrate. Allows growth on ACC as a nitrogen source. The polypeptide is 1-aminocyclopropane-1-carboxylate deaminase (Burkholderia pseudomallei (strain 1710b)).